A 292-amino-acid chain; its full sequence is uncharacterized protein (292 aa).

The next 10 membrane-spanning stretches (helical) occupy residues 6-26, 32-52, 68-88, 94-114, 123-143, 147-167, 182-202, 214-234, 242-262, and 265-285; these read LGII…KVGI, LLFS…ILFI, IIMS…GMQF, TSVL…FSLN, MGLV…MLNI, ALFG…ANVF, AWHL…FEAV, SLLF…FWVL, ASMA…LQLH, and ITIN…MNTF. EamA domains are found at residues 13 to 137 and 159 to 285; these read LIWG…FIFG and LSWG…MNTF.

Belongs to the EamA transporter family.

Its subcellular location is the cell membrane. This is an uncharacterized protein from Bacillus subtilis (strain 168).